A 216-amino-acid chain; its full sequence is uncharacterized protein (216 aa).

This is an uncharacterized protein from Escherichia coli (strain K12).